The primary structure comprises 148 residues: Glutamyl-tRNA(Gln) amidotransferase subunit C, mitochondrial (148 aa).

It belongs to the GatC family. Subunit of the heterotrimeric GatCAB amidotransferase (AdT) complex, composed of A, B and C subunits.

The protein localises to the mitochondrion. The catalysed reaction is L-glutamyl-tRNA(Gln) + L-glutamine + ATP + H2O = L-glutaminyl-tRNA(Gln) + L-glutamate + ADP + phosphate + H(+). In terms of biological role, allows the formation of correctly charged Gln-tRNA(Gln) through the transamidation of misacylated Glu-tRNA(Gln) in the mitochondria. The reaction takes place in the presence of glutamine and ATP through an activated gamma-phospho-Glu-tRNA(Gln). The protein is Glutamyl-tRNA(Gln) amidotransferase subunit C, mitochondrial of Drosophila sechellia (Fruit fly).